The following is a 194-amino-acid chain: Putative L,D-transpeptidase YciB (194 aa).

An N-terminal signal peptide occupies residues 1-19 (MKLSLFIIAVLMPVILLSA). Cys20 carries the N-palmitoyl cysteine lipid modification. The S-diacylglycerol cysteine moiety is linked to residue Cys20. The L,D-TPase catalytic domain occupies 68-194 (VWIDVNVKEQ…IPEHTKVVIS (127 aa)). His144 acts as the Proton donor/acceptor in catalysis. The active-site Nucleophile is Cys170.

The protein belongs to the YkuD family.

It localises to the cell membrane. The protein operates within cell wall biogenesis; peptidoglycan biosynthesis. The sequence is that of Putative L,D-transpeptidase YciB (yciB) from Bacillus subtilis (strain 168).